The primary structure comprises 962 residues: Vacuolar membrane protease (962 aa).

The Cytoplasmic segment spans residues 1–14 (MLAQFLRSLFRFRK). Residues 15–35 (TTVSVLLVATYVVVFLLNVWD) form a helical membrane-spanning segment. At 36–359 (RIRYQYSLPE…FVTASTKDLF (324 aa)) the chain is on the vacuolar side. N118 carries N-linked (GlcNAc...) asparagine glycosylation. H153 and D165 together coordinate Zn(2+). Residue E197 is the Proton acceptor of the active site. Zn(2+) contacts are provided by E198, E223, and H297. The chain crosses the membrane as a helical span at residues 360–380 (TLNCVVLSVIPVIILVLEFVI). Topologically, residues 381–390 (QRRKTRERNP) are cytoplasmic. Residues 391–411 (LLVWLRLPFSMFISYLVTATF) form a helical membrane-spanning segment. The Vacuolar segment spans residues 412–431 (RSSLFRVNPLIFSRDYVSPT). A helical membrane pass occupies residues 432 to 452 (IGFSFTFLILNYLVLSLLEYL). Residues 453 to 460 (APSRDLKT) lie on the Cytoplasmic side of the membrane. A helical membrane pass occupies residues 461-481 (VSFVELFFGMWIALLWATIRL). Over 482 to 489 (CTSKYTAT) the chain is Vacuolar. A helical membrane pass occupies residues 490-510 (GVYPITVLYLLMSFGAIVGLV). At 511 to 601 (CSAFKRKHSV…VVSALNYDWS (91 aa)) the chain is on the cytoplasmic side. The span at 531 to 554 (APNTYSSIEESPQQATNTEAPNEN) shows a compositional bias: polar residues. The disordered stretch occupies residues 531–563 (APNTYSSIEESPQQATNTEAPNENSPEEHDERA). Residues 602 to 622 (VQFLAVVPLASFFVIMCLSLI) form a helical membrane-spanning segment. Residues 623–639 (LDGIYQTCQEGFQATWN) lie on the Vacuolar side of the membrane. N-linked (GlcNAc...) asparagine glycosylation occurs at N639. A helical membrane pass occupies residues 640–660 (VSKISMLGGMLLAIPVLPFCY). Residue K661 is a topological domain, cytoplasmic. Residues 662 to 682 (LNYFVSMVLLFAAASAGIFSF) traverse the membrane as a helical segment. The Vacuolar portion of the chain corresponds to 683–962 (ERAPFTESSP…LVIVNDYIEL (280 aa)). N812 and N839 each carry an N-linked (GlcNAc...) asparagine glycan.

The protein belongs to the peptidase M28 family. Zn(2+) is required as a cofactor.

The protein resides in the vacuole membrane. Its function is as follows. May be involved in vacuolar sorting and osmoregulation. The protein is Vacuolar membrane protease of Lachancea thermotolerans (strain ATCC 56472 / CBS 6340 / NRRL Y-8284) (Yeast).